The following is a 528-amino-acid chain: Phosphoenolpyruvate carboxykinase (ATP) (528 aa).

Substrate contacts are provided by R56, Y192, and K198. ATP contacts are provided by residues K198, H217, and 233–241 (GLSGTGKTT). 2 residues coordinate Mn(2+): K198 and H217. A Mn(2+)-binding site is contributed by D254. ATP is bound by residues E282, R319, and T444. Substrate is bound at residue R319.

This sequence belongs to the phosphoenolpyruvate carboxykinase (ATP) family. It depends on Mn(2+) as a cofactor.

The protein resides in the cytoplasm. It catalyses the reaction oxaloacetate + ATP = phosphoenolpyruvate + ADP + CO2. It functions in the pathway carbohydrate biosynthesis; gluconeogenesis. Functionally, involved in the gluconeogenesis. Catalyzes the conversion of oxaloacetate (OAA) to phosphoenolpyruvate (PEP) through direct phosphoryl transfer between the nucleoside triphosphate and OAA. The polypeptide is Phosphoenolpyruvate carboxykinase (ATP) (Bacillus anthracis (strain A0248)).